Reading from the N-terminus, the 145-residue chain is 3-hydroxyacyl-[acyl-carrier-protein] dehydratase FabZ (145 aa).

Residue His48 is part of the active site.

It belongs to the thioester dehydratase family. FabZ subfamily.

Its subcellular location is the cytoplasm. The enzyme catalyses a (3R)-hydroxyacyl-[ACP] = a (2E)-enoyl-[ACP] + H2O. In terms of biological role, involved in unsaturated fatty acids biosynthesis. Catalyzes the dehydration of short chain beta-hydroxyacyl-ACPs and long chain saturated and unsaturated beta-hydroxyacyl-ACPs. This chain is 3-hydroxyacyl-[acyl-carrier-protein] dehydratase FabZ, found in Marinobacter nauticus (strain ATCC 700491 / DSM 11845 / VT8) (Marinobacter aquaeolei).